Here is a 563-residue protein sequence, read N- to C-terminus: Bifunctional dihydrofolate reductase-thymidylate synthase (563 aa).

Positions 3-195 (KFNIIAAINN…ILLRFQEYSV (193 aa)) constitute a DHFR domain. 117–124 (GGGVIYDL) contributes to the NADP(+) binding site. The tract at residues 275 to 563 (YIELVKTIME…CPSISAEMIA (289 aa)) is thymidylate synthase. R292 lines the dUMP pocket. C435 is an active-site residue. DUMP-binding positions include H436, 464 to 468 (QRSWD), N474, and 504 to 506 (HIY).

It in the N-terminal section; belongs to the dihydrofolate reductase family. The protein in the C-terminal section; belongs to the thymidylate synthase family.

It carries out the reaction (6S)-5,6,7,8-tetrahydrofolate + NADP(+) = 7,8-dihydrofolate + NADPH + H(+). It catalyses the reaction dUMP + (6R)-5,10-methylene-5,6,7,8-tetrahydrofolate = 7,8-dihydrofolate + dTMP. Its pathway is cofactor biosynthesis; tetrahydrofolate biosynthesis; 5,6,7,8-tetrahydrofolate from 7,8-dihydrofolate: step 1/1. In terms of biological role, bifunctional enzyme. Involved in de novo dTMP biosynthesis. Key enzyme in folate metabolism. Catalyzes an essential reaction for de novo glycine and purine synthesis, DNA precursor synthesis, and for the conversion of dUMP to dTMP. In Acanthamoeba polyphaga mimivirus (APMV), this protein is Bifunctional dihydrofolate reductase-thymidylate synthase.